The chain runs to 238 residues: Probable solute-binding protein AdeT2 (238 aa).

This sequence belongs to the bacterial solute-binding protein 7 family.

Functionally, mediates antimicrobial resistance via active efflux. Contributes to resistance to antibiotics such as chloramphenicol, erythromycin and novobiocin. May be part of a tripartite ATP-independent periplasmic (TRAP) transport system. The sequence is that of Probable solute-binding protein AdeT2 from Acinetobacter baumannii.